Consider the following 359-residue polypeptide: Peptide chain release factor 1 (359 aa).

The residue at position 234 (glutamine 234) is an N5-methylglutamine.

It belongs to the prokaryotic/mitochondrial release factor family. In terms of processing, methylated by PrmC. Methylation increases the termination efficiency of RF1.

Its subcellular location is the cytoplasm. In terms of biological role, peptide chain release factor 1 directs the termination of translation in response to the peptide chain termination codons UAG and UAA. This Clavibacter michiganensis subsp. michiganensis (strain NCPPB 382) protein is Peptide chain release factor 1.